A 296-amino-acid chain; its full sequence is Nitrogenase iron protein (296 aa).

Glycine 12–serine 19 lines the ATP pocket. Cysteine 100 is a binding site for [4Fe-4S] cluster. Arginine 103 is modified (ADP-ribosylarginine; by dinitrogenase reductase ADP-ribosyltransferase). Cysteine 134 contacts [4Fe-4S] cluster.

The protein belongs to the NifH/BchL/ChlL family. As to quaternary structure, homodimer. [4Fe-4S] cluster is required as a cofactor. The reversible ADP-ribosylation of Arg-103 inactivates the nitrogenase reductase and regulates nitrogenase activity.

It catalyses the reaction N2 + 8 reduced [2Fe-2S]-[ferredoxin] + 16 ATP + 16 H2O = H2 + 8 oxidized [2Fe-2S]-[ferredoxin] + 2 NH4(+) + 16 ADP + 16 phosphate + 6 H(+). Its function is as follows. The key enzymatic reactions in nitrogen fixation are catalyzed by the nitrogenase complex, which has 2 components: the iron protein and the molybdenum-iron protein. This is Nitrogenase iron protein from Acidithiobacillus ferrooxidans (strain ATCC 23270 / DSM 14882 / CIP 104768 / NCIMB 8455) (Ferrobacillus ferrooxidans (strain ATCC 23270)).